We begin with the raw amino-acid sequence, 481 residues long: Proline--tRNA ligase (481 aa).

Belongs to the class-II aminoacyl-tRNA synthetase family. ProS type 3 subfamily. As to quaternary structure, homodimer.

The protein localises to the cytoplasm. The catalysed reaction is tRNA(Pro) + L-proline + ATP = L-prolyl-tRNA(Pro) + AMP + diphosphate. Its function is as follows. Catalyzes the attachment of proline to tRNA(Pro) in a two-step reaction: proline is first activated by ATP to form Pro-AMP and then transferred to the acceptor end of tRNA(Pro). The protein is Proline--tRNA ligase of Chlorobium luteolum (strain DSM 273 / BCRC 81028 / 2530) (Pelodictyon luteolum).